The primary structure comprises 452 residues: 3-phosphoshikimate 1-carboxyvinyltransferase (452 aa).

Positions 1–23 are disordered; sequence MLNGSASKPATARKSAGLTGSVR. 3-phosphoshikimate-binding residues include lysine 28, serine 29, and arginine 33. Position 28 (lysine 28) interacts with phosphoenolpyruvate. Residues glycine 100 and arginine 128 each contribute to the phosphoenolpyruvate site. 4 residues coordinate 3-phosphoshikimate: serine 173, glutamine 175, aspartate 326, and lysine 353. Residue glutamine 175 coordinates phosphoenolpyruvate. Aspartate 326 serves as the catalytic Proton acceptor. Phosphoenolpyruvate contacts are provided by arginine 357 and arginine 405.

This sequence belongs to the EPSP synthase family. In terms of assembly, monomer.

It localises to the cytoplasm. It carries out the reaction 3-phosphoshikimate + phosphoenolpyruvate = 5-O-(1-carboxyvinyl)-3-phosphoshikimate + phosphate. It participates in metabolic intermediate biosynthesis; chorismate biosynthesis; chorismate from D-erythrose 4-phosphate and phosphoenolpyruvate: step 6/7. Catalyzes the transfer of the enolpyruvyl moiety of phosphoenolpyruvate (PEP) to the 5-hydroxyl of shikimate-3-phosphate (S3P) to produce enolpyruvyl shikimate-3-phosphate and inorganic phosphate. This is 3-phosphoshikimate 1-carboxyvinyltransferase from Rhizobium johnstonii (strain DSM 114642 / LMG 32736 / 3841) (Rhizobium leguminosarum bv. viciae).